Consider the following 303-residue polypeptide: Acetaldehyde dehydrogenase 2 (303 aa).

Catalysis depends on Cys-130, which acts as the Acyl-thioester intermediate. NAD(+) contacts are provided by residues 161-169 (SVGPGTRKN) and Asn-272.

The protein belongs to the acetaldehyde dehydrogenase family.

It carries out the reaction acetaldehyde + NAD(+) + CoA = acetyl-CoA + NADH + H(+). In Burkholderia vietnamiensis (strain G4 / LMG 22486) (Burkholderia cepacia (strain R1808)), this protein is Acetaldehyde dehydrogenase 2.